The primary structure comprises 458 residues: Argininosuccinate lyase (458 aa).

Belongs to the lyase 1 family. Argininosuccinate lyase subfamily.

The protein localises to the cytoplasm. It carries out the reaction 2-(N(omega)-L-arginino)succinate = fumarate + L-arginine. The protein operates within amino-acid biosynthesis; L-arginine biosynthesis; L-arginine from L-ornithine and carbamoyl phosphate: step 3/3. This Neisseria gonorrhoeae (strain ATCC 700825 / FA 1090) protein is Argininosuccinate lyase.